The following is a 251-amino-acid chain: Capsid protein (251 aa).

The segment at 1-35 (MPKRDAPWRHMAGTSKVSRSGNYSPSGGMGSKSNK) is disordered. The short motif at 3–20 (KRDAPWRHMAGTSKVSRS) is the Bipartite nuclear localization signal element. Polar residues predominate over residues 15–35 (SKVSRSGNYSPSGGMGSKSNK). The Nuclear localization signal motif lies at 35–49 (KANAWVNRPMYRKPR). The segment at 54-71 (YKSPDVPKGCEGPCKVQS) is a zinc-finger region. The Nuclear export signal motif lies at 96 to 117 (ITHRVGKRFCVKSVYILGKIWM). Residues 195 to 242 (RRFWKVNNHVVYNHQEAGKYENHTENALLLYMACTHASNPVYATLKIR) carry the Bipartite nuclear localization signal motif.

The protein belongs to the geminiviridae capsid protein family. In terms of assembly, homomultimer. Binds to single-stranded and double-stranded viral DNA. Interacts (via nuclear localization signals) with host importin alpha-1a.

It localises to the virion. The protein resides in the host nucleus. Functionally, encapsidates the viral DNA into characteristic twinned ('geminate') particles. Binds the genomic viral ssDNA and shuttles it into and out of the cell nucleus. The CP of bipartite geminiviruses is not required for cell-to-cell or systemic movement. This chain is Capsid protein, found in Macroptilium lathyroides (Lima bean).